Reading from the N-terminus, the 572-residue chain is 2-isopropylmalate synthase (572 aa).

Residues 31 to 305 (PIWMSTDLRD…DPGLDFSNIN (275 aa)) form the Pyruvate carboxyltransferase domain. Mg(2+) contacts are provided by D40, H244, H246, and N280. Residues 437 to 572 (NATPVHYVGH…MNDATESVGV (136 aa)) form a regulatory domain region.

The protein belongs to the alpha-IPM synthase/homocitrate synthase family. LeuA type 2 subfamily. Homodimer. The cofactor is Mg(2+).

It localises to the cytoplasm. The catalysed reaction is 3-methyl-2-oxobutanoate + acetyl-CoA + H2O = (2S)-2-isopropylmalate + CoA + H(+). It participates in amino-acid biosynthesis; L-leucine biosynthesis; L-leucine from 3-methyl-2-oxobutanoate: step 1/4. Catalyzes the condensation of the acetyl group of acetyl-CoA with 3-methyl-2-oxobutanoate (2-ketoisovalerate) to form 3-carboxy-3-hydroxy-4-methylpentanoate (2-isopropylmalate). In Paraburkholderia xenovorans (strain LB400), this protein is 2-isopropylmalate synthase.